Reading from the N-terminus, the 185-residue chain is Elongation factor P (185 aa).

It belongs to the elongation factor P family.

The protein resides in the cytoplasm. It functions in the pathway protein biosynthesis; polypeptide chain elongation. Its function is as follows. Involved in peptide bond synthesis. Stimulates efficient translation and peptide-bond synthesis on native or reconstituted 70S ribosomes in vitro. Probably functions indirectly by altering the affinity of the ribosome for aminoacyl-tRNA, thus increasing their reactivity as acceptors for peptidyl transferase. This Kosmotoga olearia (strain ATCC BAA-1733 / DSM 21960 / TBF 19.5.1) protein is Elongation factor P.